Reading from the N-terminus, the 224-residue chain is COMM domain-containing protein 5 (224 aa).

N-acetylserine is present on serine 2. One can recognise a COMM domain in the interval 151 to 215; the sequence is HVSYFRWRVD…LVLKEMAELE (65 aa).

The protein belongs to the COMM domain-containing protein 5 family. Component of the commander complex consisting of the CCC subcomplex and the retriever subcomplex. Component of the CCC (COMMD/CCDC22/CCDC93) subcomplex consisting of COMMD1, COMMD2, COMMD3, COMMD4, COMMD5, COMMD6, COMMD7, COMMD8, COMMD9, COMMD10, CCDC22 and CCDC93; within the complex forms a heterodimer with COMMD10. Interacts (via COMM domain) with COMMD1 (via COMM domain). Interacts with RELA, RELB, NFKB1/p105. Interacts with CCDC22, CCDC93, SCNN1B, CUL2, CUL3, CUL4A, CUL4B, CUL7. As to expression, expressed in the zona fasciculata and medulla of the adrenal gland; expressed in kidney proximal tubules. Basal expression is higher in hypertensive than in normotensive animals.

Its subcellular location is the nucleus. In terms of biological role, scaffold protein in the commander complex that is essential for endosomal recycling of transmembrane cargos; the commander complex is composed of the CCC subcomplex and the retriever subcomplex. May modulate activity of cullin-RING E3 ubiquitin ligase (CRL) complexes. Negatively regulates cell proliferation. Negatively regulates cell cycle G2/M phase transition probably by transactivating p21/CDKN1A through the p53/TP53-independent signaling pathway. Involved in kidney proximal tubule morphogenesis. Down-regulates activation of NF-kappa-B. The polypeptide is COMM domain-containing protein 5 (Commd5) (Rattus norvegicus (Rat)).